The chain runs to 429 residues: Histidine--tRNA ligase (429 aa).

It belongs to the class-II aminoacyl-tRNA synthetase family. Homodimer.

The protein resides in the cytoplasm. It carries out the reaction tRNA(His) + L-histidine + ATP = L-histidyl-tRNA(His) + AMP + diphosphate + H(+). This is Histidine--tRNA ligase from Streptococcus pneumoniae (strain Taiwan19F-14).